The primary structure comprises 127 residues: Small ribosomal subunit protein uS11 (127 aa).

Belongs to the universal ribosomal protein uS11 family. In terms of assembly, part of the 30S ribosomal subunit. Interacts with proteins S7 and S18. Binds to IF-3.

Located on the platform of the 30S subunit, it bridges several disparate RNA helices of the 16S rRNA. Forms part of the Shine-Dalgarno cleft in the 70S ribosome. The polypeptide is Small ribosomal subunit protein uS11 (Nitrosococcus oceani (strain ATCC 19707 / BCRC 17464 / JCM 30415 / NCIMB 11848 / C-107)).